The following is a 677-amino-acid chain: Methionine--tRNA ligase (677 aa).

Residues 15-25 (PYANGSIHLGH) carry the 'HIGH' region motif. Zn(2+)-binding residues include C146, C149, C159, and C162. Residues 333-337 (KMSKS) carry the 'KMSKS' region motif. K336 is an ATP binding site. Positions 575–677 (DFAKIDLRVA…DGAKPGQQVK (103 aa)) constitute a tRNA-binding domain.

Belongs to the class-I aminoacyl-tRNA synthetase family. MetG type 1 subfamily. As to quaternary structure, homodimer. Requires Zn(2+) as cofactor.

The protein resides in the cytoplasm. It carries out the reaction tRNA(Met) + L-methionine + ATP = L-methionyl-tRNA(Met) + AMP + diphosphate. Functionally, is required not only for elongation of protein synthesis but also for the initiation of all mRNA translation through initiator tRNA(fMet) aminoacylation. The sequence is that of Methionine--tRNA ligase from Salmonella paratyphi B (strain ATCC BAA-1250 / SPB7).